The following is a 222-amino-acid chain: Triosephosphate isomerase (222 aa).

9–11 (NFK) serves as a coordination point for substrate. Catalysis depends on His93, which acts as the Electrophile. Glu141 (proton acceptor) is an active-site residue. Residues Ile146, Gly181, and 202–203 (AS) each bind substrate.

Belongs to the triosephosphate isomerase family. Homotetramer; dimer of dimers.

It localises to the cytoplasm. The enzyme catalyses D-glyceraldehyde 3-phosphate = dihydroxyacetone phosphate. It functions in the pathway carbohydrate biosynthesis; gluconeogenesis. The protein operates within carbohydrate degradation; glycolysis; D-glyceraldehyde 3-phosphate from glycerone phosphate: step 1/1. Functionally, involved in the gluconeogenesis. Catalyzes stereospecifically the conversion of dihydroxyacetone phosphate (DHAP) to D-glyceraldehyde-3-phosphate (G3P). In Methanothermus fervidus (strain ATCC 43054 / DSM 2088 / JCM 10308 / V24 S), this protein is Triosephosphate isomerase.